The sequence spans 417 residues: MIDLQLLREDPDVVRRSQLSRGEDPALVDALLTADTARRAAISAADSLRAEQKATSKSLGAASAEDRPALLERAKDLAEQVKAAETTQAETAAAFAAAYMAISNVVLDGVPTGGKDDYAVLDIVGDPPPLSNPKDHLELGEALGLIDMQRGAKVSGSRFYFLTGRGALLQLGLLQLALRLAVENDFIPMIPPVLVRPEVMSGTGFLGAHAEEVYRVDDLYLVGTSEVPMAGYHSDEILDLSVGPLRYAGWSSCFRREAGSHGKDTRGIIRVHQFDKVEGFVYCAPTDAEVEHQRLLGWQREMLARIEVPYRVIDVAAGDLGSSAARKFDCEAWVPTQGSYCELTSTSNCTTFQARRLATRYRDASGKPQIVATLNGTLGTTRWLVAILENHQRPDGSVRVPPALVPFVGTELLESPR.

L-serine is bound at residue threonine 224–glutamate 226. Residues arginine 255–glutamate 257 and valine 271 each bind ATP. An L-serine-binding site is contributed by glutamate 278. ATP is bound at residue glutamate 342–serine 345. Residue threonine 377 coordinates L-serine.

It belongs to the class-II aminoacyl-tRNA synthetase family. Type-1 seryl-tRNA synthetase subfamily. In terms of assembly, homodimer. The tRNA molecule binds across the dimer.

It localises to the cytoplasm. The catalysed reaction is tRNA(Ser) + L-serine + ATP = L-seryl-tRNA(Ser) + AMP + diphosphate + H(+). The enzyme catalyses tRNA(Sec) + L-serine + ATP = L-seryl-tRNA(Sec) + AMP + diphosphate + H(+). It functions in the pathway aminoacyl-tRNA biosynthesis; selenocysteinyl-tRNA(Sec) biosynthesis; L-seryl-tRNA(Sec) from L-serine and tRNA(Sec): step 1/1. Catalyzes the attachment of serine to tRNA(Ser). Is also able to aminoacylate tRNA(Sec) with serine, to form the misacylated tRNA L-seryl-tRNA(Sec), which will be further converted into selenocysteinyl-tRNA(Sec). This Mycobacterium leprae (strain TN) protein is Serine--tRNA ligase.